The sequence spans 806 residues: MRYDFQSIEKKWQAYWNEHQTFLTKETVDKPKYYVLDMFPYPSGSGLHVGHLEGYTATDIISRYKRSRGHNVLHPMGWDAFGLPAEQFAIKTGTHPKVITEKNVSSFKDTLMRMGFSYDWNREINTTDPGYYAWTQWIFLQLLDRGLAYTSEIDVNWCEELKTVLANEEVAEKVADGHAVVRKPLRQWVLKITAYAERLLSDLDLVDWPESVKQMQRNWIGRSEGVEIDFQLPCHRTSLKVYTTRPDTLFGATYLVISPEHPMAEKLATAEHLIEAKNYIEEAKRKTELERTGLQKEKTGVFTGSFAVNPANGQALPVWISDFVLTSYGTGAIMSVPAHDGRDWEFAKKFDLPIVEVIKSPHDVEEAVFEEKGSVCINSSNDDISLDGLPFETSFGVMADWLEKKGTGKRTVKYKLRDWIFSRQRYWGEPIPVKYYEDGTLRPESDLPLTLPDIEAYEPTTTGESPLANISEWLYGTDENGSFRRETNTMPQWAGSCWYYLRFIDPGNTEKPVDPKKEQYWMNVDLYVGGAEHAVLHLLYARFWHKVLFDLGVVSTKEPFQKLFNQGMILGEDNEKMSKSRGNVIPADQVLGSYGADAVRLYEMFLGPLEQVKPWNTNGIEGVSRFLSRVWRLIYPEPGSMAELNEAPLTEDLTRTMHKAVKKITDHTEQLKFNTAISEMMVFVNELHKSGSRNRTAVETLLLLLSPYAPHICEELWEAIGHDTSITEENWPLFDPALAADNEVTIAVQVNGKLRGTVTAPAGSPKNILLDSARKEESVRKFLDGMSIIKEVVVPDRLVNFVVKPG.

The 'HIGH' region motif lies at 40–51; the sequence is PYPSGSGLHVGH. A 'KMSKS' region motif is present at residues 576–580; it reads KMSKS. Lys579 provides a ligand contact to ATP.

It belongs to the class-I aminoacyl-tRNA synthetase family.

It localises to the cytoplasm. The catalysed reaction is tRNA(Leu) + L-leucine + ATP = L-leucyl-tRNA(Leu) + AMP + diphosphate. In Chlorobium phaeobacteroides (strain BS1), this protein is Leucine--tRNA ligase.